The following is a 425-amino-acid chain: Isocitrate dehydrogenase [NADP] (425 aa).

Threonine 114 provides a ligand contact to NADP(+). Positions 123, 125, 129, 139, and 162 each coordinate D-threo-isocitrate. Aspartate 316 is a Mg(2+) binding site. NADP(+) contacts are provided by residues 348–354 (HGTAPKY), asparagine 361, tyrosine 400, and arginine 404.

The protein belongs to the isocitrate and isopropylmalate dehydrogenases family. As to quaternary structure, homodimer. It depends on Mg(2+) as a cofactor. Requires Mn(2+) as cofactor.

It carries out the reaction D-threo-isocitrate + NADP(+) = 2-oxoglutarate + CO2 + NADPH. Functionally, catalyzes the oxidative decarboxylation of isocitrate to 2-oxoglutarate and carbon dioxide with the concomitant reduction of NADP(+). This Helicobacter pylori (strain ATCC 700392 / 26695) (Campylobacter pylori) protein is Isocitrate dehydrogenase [NADP] (icd).